Here is a 2136-residue protein sequence, read N- to C-terminus: MLKAFLPGTQEEETLSSLQSGKVDAKMEMDDPEKAMATVAQLIEQLHAKTSSPQDKELTTARLLGIAKGKREARRLIGSYGQAMPLFISMLRNGTTLAKVNVASILCVLCKDKDLRLKVLLGGCIPPLLSVLKSGTMETRKAAAEAIYEVSSAGISNDHIGMKIFITEGVVPTLWDQLSLKGNQDKVVEGYVTGALRNLCGVDDGYWRLTLEGSGVDIVVSLLSSDNPNSQANAASLLARLVLSFCDSIQKILNSGVVKSLIQLLEQKNDINVRASAADALEALSANSDEAKKCVKDAGGVHALIEAIVAPSKECMQGKHGQSLQEHATGALANVFGGMRHLIIYLGQVSQSPRLTEPIGDVIGALAYALMIFKQPESSENIFDPSVIESILVKLLKPRDTKLIQERILEAMASLYGNSSLSCYLDDAEAKRVLIALITMASADVRERLIICLSGLCHDKVGIWEAIGKREGIQLFISFLGLSSEQHQEYAVEMLKILTAQVDDSKWAVTAAGGIPPLVQLLETGSQKAKEDAACILWNLCCHSEEIRDCVERAGGIPAFLWLLKTGGPNSQETSAKTLVKLVHTADPATINQLLALLLGDDPTSKIQVIEVLGHVLSKASQEDLVHRGCAANKGLRSLVESLTSSREETKEHTASVLADLFSSRQDICGHLATDDIINPWIKLLTNNTQNVAKQVARALDALSRPVKNNNNKKKSYIAEGDIKSLIKLAKNSSIESAENAVSALANLLSDPDIAAEALAEDVVSAFTRILADGSPEGKRNASRALHQLLKNFPVCDVLKGSAQCRFAILSLVDSLKSIDVDSADAFNILEVVALLAKTKSGVNFSYPPWIALAEVPSSLETLVQCLAEGHTLVQDKAIEVLSRLCSDQQFLLSELIVSRPKSMLVLADRIVNASSLEVRVGSTALLLCAAKEKKQLITETLDQSGFLKLLLHALVDMIKHNSTSFSLETEVQTPKGFLEKNVFQDTGSFYFPDPAKILGGTVALWLLCILTSVDAKSKVIVMEAGGLEVLVGKLARYTSSAQAEFEDTEGIWISALLLAIMFQDDNVSFSSTTMRIIPTLAVLLGSDELIDRYFAAHAMASLVCTRNRGINLTIANSGAVSGIINLLGYVESEILNLVALANEFSLVKEPDQVILQHLFEIEDVRLGSTARKSIPLLVDLLRPIPDRPGAPQFAVQILIRIADGSDTNKLLMAEAGAVEALTKYLSLSPQDSTEYAISELLRVLFSNHELRQNEMALSSLNQLIAVLRLGSRSARYSAAGALNELFDAENIRNSEIACQAVQPLMDILGSVSESEQEVALSALIKLSSGNTSNTALLIDVEGSLLENVIKILSSATASEELKINAARLCSVVFSNKNIRTSASASGCMKPLITLMQSERSAAVEAAVFAIKILLDDEQHLELAAAHNIQELLVGLVSGKNYVIIEASLSALIKLGKDRVPRKLDMVEAGIIERCLELLPGASSSLCSAVVELFRILTNSGVIARRPDVAKTVEPLFAVLLRSDLTLWGQHSALQALVNILEKQQTLEAFSFTPSEAIVPLISFLESSSQAIQQLGAELLSHFLTMEDFQQDITTQSAVVPLVRLAGIGILSLQETAIKALEKISASWPKAVLDAEGIFELSKVILQEDPQPPLDLWESAAFVLSNILQYDAECFFRVELPVLVKLLFSTIESTVLLALKALMLHEKNDASSTVQMAELGAIDALLDLLRSHQCEEESGSLLEVIFNNPRVRELKLCKYAIAPLSQYLLDPHTRSEPGRLLAALALGDLSQHEGLSRSSGSVSACRALISVLEEQPTEEMKVVAICALQNFVMNSRTNRRAVAEAGGVLLIQELLLSCNPEVSGQAALMVKFLFSNHTLQEYVSNELIRSLTAALERGLWSTATINIEVLRTLNVIFSNFPKLRASEAATFCIPHLVGALKSGVEDVQGLVLDILYLLRHSWTNMSIDVAKSQAMIAAEAIPVLQMLMKTCPPRFHDKADSLLHCLPGCLTVNVMRANNLKQSMATTNAFCQLTIGNCPPRQTKVVSNSTTPEWKEGFTWAFDVPPKGQKLHIICKSKSTFGKTTLGRVTIQIDKVVTEGEYSGSLSLNHENSKDASSRSLDIEIAWSNRTTDETH.

ARM repeat units follow at residues 27 to 66 (MEMDDPEKAMATVAQLIEQLHAKTSSPQDKELTTARLLGI), 71 to 111 (REAR…VLCK), 113 to 152 (KDLRLKVLLGGCIPPLLSVLKSGTMETRKAAAEAIYEVSS), 159 to 201 (HIGM…NLCG), 204 to 243 (DGYWRLTLEGSGVDIVVSLLSSDNPNSQANAASLLARLVL), 246 to 286 (CDSI…ALSA), 289 to 337 (DEAK…NVFG), 376 to 417 (PESS…SLYG), 419 to 458 (SSLSCYLDDAEAKRVLIALITMASADVRERLIICLSGLCH), 461 to 500 (VGIWEAIGKREGIQLFISFLGLSSEQHQEYAVEMLKILTA), 503 to 542 (DDSKWAVTAAGGIPPLVQLLETGSQKAKEDAACILWNLCC), 545 to 584 (EEIRDCVERAGGIPAFLWLLKTGGPNSQETSAKTLVKLVH), 586 to 618 (ADPATINQLLALLLGDDPTSKIQVIEVLGHVLS), 619 to 663 (KASQ…DLFS), 666 to 705 (QDICGHLATDDIINPWIKLLTNNTQNVAKQVARALDALSR), 711 to 750 (NNKKKSYIAEGDIKSLIKLAKNSSIESAENAVSALANLLS), 752 to 791 (PDIAAEALAEDVVSAFTRILADGSPEGKRNASRALHQLLK), 811 to 848 (SLVDSLKSIDVDSADAFNILEVVALLAKTKSGVNFSYP), 849 to 887 (PWIALAEVPSSLETLVQCLAEGHTLVQDKAIEVLSRLCS), 936 to 980 (QLIT…GFLE), 1013 to 1041 (SVDAKSKVIVMEAGGLEVLVGKLARYTSS), 1042 to 1083 (AQAE…TLAV), 1109 to 1149 (RGIN…SLVK), 1163 to 1204 (EDVR…RIAD), 1207 to 1247 (DTNK…VLFS), 1249 to 1288 (HELRQNEMALSSLNQLIAVLRLGSRSARYSAAGALNELFD), 1290 to 1329 (ENIRNSEIACQAVQPLMDILGSVSESEQEVALSALIKLSS), 1333 to 1375 (SNTA…VVFS), 1377 to 1416 (KNIRTSASASGCMKPLITLMQSERSAAVEAAVFAIKILLD), 1418 to 1457 (EQHLELAAAHNIQELLVGLVSGKNYVIIEASLSALIKLGK), 1460 to 1499 (VPRKLDMVEAGIIERCLELLPGASSSLCSAVVELFRILTN), 1518 to 1546 (AVLLRSDLTLWGQHSALQALVNILEKQQT), 1547 to 1585 (LEAFSFTPSEAIVPLISFLESSSQAIQQLGAELLSHFLT), 1587 to 1626 (EDFQQDITTQSAVVPLVRLAGIGILSLQETAIKALEKISA), 1628 to 1669 (WPKA…NILQ), 1670 to 1704 (YDAECFFRVELPVLVKLLFSTIESTVLLALKALML), 1710 to 1750 (ASST…NNPR), 1790 to 1833 (SQHE…NFVM), 1836 to 1875 (RTNRRAVAEAGGVLLIQELLLSCNPEVSGQAALMVKFLFS), 1921 to 1960 (PKLRASEAATFCIPHLVGALKSGVEDVQGLVLDILYLLRH), 1969 to 2008 (VAKSQAMIAAEAIPVLQMLMKTCPPRFHDKADSLLHCLPG), and 2010 to 2035 (LTVNVMRANNLKQSMATTNAFCQLTI). Positions 1989–2106 (KTCPPRFHDK…VTEGEYSGSL (118 aa)) constitute a C2 domain.

As to quaternary structure, associates with cellulase synthase (CESA) complexes. Binds to cortical microtubules. Interacts with CESA3 and CESA6. As to expression, expressed in dark-grown hypocotyls, leaves (confined to vasculature and trichomes), stamen, pollen, developing siliques, and roots. Restricted in meristematic tissue of the shoot and root. Present in distinct punctae at the cell cortex, called microtubule-associated cellulose synthase compartments, that move with constant velocities of 10 to 3000 nm/min.

Its subcellular location is the cell membrane. The protein localises to the cytoplasm. It is found in the cytoskeleton. It localises to the endomembrane system. Functionally, regulator of the microtubular cytoskeleton. Microtubule-associated protein involved in the association of cellulase synthase (CESA) complexes (CSCs) and cortical microtubules. Promotes dynamics of CSCs in the plasma membrane in both microtubules-dependent and microtubules-independent manners. Regulates primary cell wall biosynthesis and cellulose microfibrils organization. This Arabidopsis thaliana (Mouse-ear cress) protein is Protein CELLULOSE SYNTHASE INTERACTIVE 3.